The following is a 243-amino-acid chain: LexA repressor 2 (243 aa).

The segment at residues 48 to 68 is a DNA-binding region (H-T-H motif); that stretch reads IREIGDAVGLTSTSSVAHQLR. Catalysis depends on for autocatalytic cleavage activity residues Ser-167 and Lys-204.

It belongs to the peptidase S24 family. Homodimer.

It catalyses the reaction Hydrolysis of Ala-|-Gly bond in repressor LexA.. Its function is as follows. Represses a number of genes involved in the response to DNA damage (SOS response), including recA and lexA. In the presence of single-stranded DNA, RecA interacts with LexA causing an autocatalytic cleavage which disrupts the DNA-binding part of LexA, leading to derepression of the SOS regulon and eventually DNA repair. This is LexA repressor 2 from Nocardia farcinica (strain IFM 10152).